Consider the following 321-residue polypeptide: Malate dehydrogenase (321 aa).

NAD(+)-binding positions include 10–15 and Asp34; that span reads GSGMIG. Arg83 and Arg89 together coordinate substrate. Residues Asn96 and 119 to 121 contribute to the NAD(+) site; that span reads ITN. Residues Asn121 and Arg152 each contribute to the substrate site. The active-site Proton acceptor is His176.

It belongs to the LDH/MDH superfamily. MDH type 3 family.

The catalysed reaction is (S)-malate + NAD(+) = oxaloacetate + NADH + H(+). In terms of biological role, catalyzes the reversible oxidation of malate to oxaloacetate. The polypeptide is Malate dehydrogenase (Chelativorans sp. (strain BNC1)).